Consider the following 403-residue polypeptide: Phosphoglycerate kinase (403 aa).

Substrate contacts are provided by residues 21-23 (DFN), Arg36, 59-62 (HLGR), Arg119, and Arg159. ATP is bound by residues Lys214, Gly301, Glu332, and 359-362 (GGDS).

It belongs to the phosphoglycerate kinase family. In terms of assembly, monomer.

It is found in the cytoplasm. The catalysed reaction is (2R)-3-phosphoglycerate + ATP = (2R)-3-phospho-glyceroyl phosphate + ADP. The protein operates within carbohydrate degradation; glycolysis; pyruvate from D-glyceraldehyde 3-phosphate: step 2/5. In Lactobacillus gasseri (strain ATCC 33323 / DSM 20243 / BCRC 14619 / CIP 102991 / JCM 1131 / KCTC 3163 / NCIMB 11718 / NCTC 13722 / AM63), this protein is Phosphoglycerate kinase.